A 347-amino-acid chain; its full sequence is Ribosomal RNA small subunit methyltransferase H (347 aa).

Residues 50–52 (GGH), D69, F96, D125, and Q132 contribute to the S-adenosyl-L-methionine site.

The protein belongs to the methyltransferase superfamily. RsmH family.

It localises to the cytoplasm. The catalysed reaction is cytidine(1402) in 16S rRNA + S-adenosyl-L-methionine = N(4)-methylcytidine(1402) in 16S rRNA + S-adenosyl-L-homocysteine + H(+). In terms of biological role, specifically methylates the N4 position of cytidine in position 1402 (C1402) of 16S rRNA. The protein is Ribosomal RNA small subunit methyltransferase H of Corynebacterium aurimucosum (strain ATCC 700975 / DSM 44827 / CIP 107346 / CN-1) (Corynebacterium nigricans).